The primary structure comprises 256 residues: NAD-dependent protein deacylase 2 (256 aa).

One can recognise a Deacetylase sirtuin-type domain in the interval 1–256 (MDSHSPIATV…MPQVVSHIYR (256 aa)). Residues 25–44 (GAGL…GGLY) and 108–111 (QNID) contribute to the NAD(+) site. The active-site Proton acceptor is the His-128. Cys-136, Cys-139, Cys-158, and Cys-161 together coordinate Zn(2+). NAD(+)-binding positions include 199–201 (GTT), 225–227 (NPG), and Ala-243.

This sequence belongs to the sirtuin family. Class III subfamily. It depends on Zn(2+) as a cofactor.

The protein localises to the cytoplasm. It carries out the reaction N(6)-acetyl-L-lysyl-[protein] + NAD(+) + H2O = 2''-O-acetyl-ADP-D-ribose + nicotinamide + L-lysyl-[protein]. Functionally, NAD-dependent protein deacetylase which modulates the activities of several proteins which are inactive in their acetylated form. This is NAD-dependent protein deacylase 2 (cobB2) from Pseudomonas aeruginosa (strain ATCC 15692 / DSM 22644 / CIP 104116 / JCM 14847 / LMG 12228 / 1C / PRS 101 / PAO1).